We begin with the raw amino-acid sequence, 186 residues long: MAKAVWVHALVDVPEGVEVEVEGSKVKVRGPKGELERDFSHAKGIRIRVVEEEGKKQVLVETFFANRKRKALVNTVAAHIKNMITGVTKGWRYKMKIVFSHFPISVKVVGDRVEIHNFIGEKAPRVAKVLPGVTVKVQGRDVIIEGTDIEKVAQTAANIEQATKITEFDRRVFMDGIYIYAREVMS.

Belongs to the universal ribosomal protein uL6 family. Part of the 50S ribosomal subunit.

In terms of biological role, this protein binds to the 23S rRNA, and is important in its secondary structure. It is located near the subunit interface in the base of the L7/L12 stalk, and near the tRNA binding site of the peptidyltransferase center. The protein is Large ribosomal subunit protein uL6 of Ignicoccus hospitalis (strain KIN4/I / DSM 18386 / JCM 14125).